The sequence spans 701 residues: ER-retained PMA1-suppressing protein 1 (701 aa).

A signal peptide spans 1-27 (MKMNLKRLVVTFFSCITFLLKFTIAAA). The Thioredoxin 1 domain maps to 28–142 (EPPEGFPEPL…LIAFARRESM (115 aa)). A disulfide bond links cysteine 60 and cysteine 63. Residue asparagine 85 is glycosylated (N-linked (GlcNAc...) asparagine). The cysteines at positions 200 and 203 are disulfide-linked. 3 N-linked (GlcNAc...) asparagine glycosylation sites follow: asparagine 264, asparagine 299, and asparagine 370. The 39-residue stretch at 408–446 (PTFFMFKDGDPISYVFPGYSTTEMRNIDAIMDWVKKYSN) folds into the Thioredoxin 2 domain. A helical membrane pass occupies residues 646 to 666 (IIHGNGMPGYLIVIVLFIAIL).

This sequence belongs to the protein disulfide isomerase family. In terms of assembly, interacts with mutated PMA1-D378N but not wild type PMA1. Interacts with EUG1, KAR2, MPD1 and PDI1.

It is found in the endoplasmic reticulum membrane. It catalyses the reaction Catalyzes the rearrangement of -S-S- bonds in proteins.. Functionally, acts as a membrane-bound chaperone in endoplasmic reticulum quality control. Probably facilitates presentation of substrate to membrane-bound components of the degradation machinery. This Saccharomyces cerevisiae (strain ATCC 204508 / S288c) (Baker's yeast) protein is ER-retained PMA1-suppressing protein 1 (EPS1).